The primary structure comprises 414 residues: Succinylornithine transaminase (414 aa).

An N6-(pyridoxal phosphate)lysine modification is found at Lys-260.

This sequence belongs to the class-III pyridoxal-phosphate-dependent aminotransferase family. AstC subfamily. Pyridoxal 5'-phosphate serves as cofactor.

It carries out the reaction N(2)-succinyl-L-ornithine + 2-oxoglutarate = N-succinyl-L-glutamate 5-semialdehyde + L-glutamate. The protein operates within amino-acid degradation; L-arginine degradation via AST pathway; L-glutamate and succinate from L-arginine: step 3/5. In terms of biological role, catalyzes the transamination of N(2)-succinylornithine and alpha-ketoglutarate into N(2)-succinylglutamate semialdehyde and glutamate. Can also act as an acetylornithine aminotransferase. This Yersinia pestis bv. Antiqua (strain Antiqua) protein is Succinylornithine transaminase.